The following is a 263-amino-acid chain: Type III pantothenate kinase (263 aa).

Position 9-16 (9-16 (DIGNTSIK)) interacts with ATP. Substrate-binding positions include Tyr103 and 110–113 (GADR). Asp112 (proton acceptor) is an active-site residue. Asp134 is a K(+) binding site. Thr137 is an ATP binding site. Thr190 provides a ligand contact to substrate.

The protein belongs to the type III pantothenate kinase family. In terms of assembly, homodimer. NH4(+) is required as a cofactor. Requires K(+) as cofactor.

It is found in the cytoplasm. It catalyses the reaction (R)-pantothenate + ATP = (R)-4'-phosphopantothenate + ADP + H(+). It participates in cofactor biosynthesis; coenzyme A biosynthesis; CoA from (R)-pantothenate: step 1/5. Its function is as follows. Catalyzes the phosphorylation of pantothenate (Pan), the first step in CoA biosynthesis. This chain is Type III pantothenate kinase, found in Desulfovibrio desulfuricans (strain ATCC 27774 / DSM 6949 / MB).